Reading from the N-terminus, the 268-residue chain is Receptor expression-enhancing protein 2 (268 aa).

The next 2 helical transmembrane spans lie at 1 to 21 (MVSW…YPAY) and 35 to 55 (YVKW…ETIT). Positions 170–268 (GDDTHTAATL…TTANNVAESP (99 aa)) are disordered. Positions 180-196 (PRAKTATRTVRATPVPA) are enriched in low complexity. Positions 199 to 216 (ESQHSSRSDDQSDSRTEH) are enriched in basic and acidic residues. Over residues 228–248 (RIAITRAAKKPAAAKTEQTTK) the composition is skewed to low complexity. The span at 249–258 (TVKKAPKKKP) shows a compositional bias: basic residues.

Belongs to the DP1 family. In terms of assembly, interacts with odorant receptor proteins.

It localises to the membrane. Its function is as follows. May enhance the cell surface expression of odorant receptors. This is Receptor expression-enhancing protein 2 (reep2) from Danio rerio (Zebrafish).